The chain runs to 152 residues: 3-hydroxyacyl-[acyl-carrier-protein] dehydratase FabZ (152 aa).

Residue histidine 58 is part of the active site.

The protein belongs to the thioester dehydratase family. FabZ subfamily.

It is found in the cytoplasm. It carries out the reaction a (3R)-hydroxyacyl-[ACP] = a (2E)-enoyl-[ACP] + H2O. Its function is as follows. Involved in unsaturated fatty acids biosynthesis. Catalyzes the dehydration of short chain beta-hydroxyacyl-ACPs and long chain saturated and unsaturated beta-hydroxyacyl-ACPs. The chain is 3-hydroxyacyl-[acyl-carrier-protein] dehydratase FabZ from Prochlorococcus marinus (strain MIT 9215).